The chain runs to 154 residues: Superoxide dismutase [Cu-Zn] (154 aa).

Positions 47, 49, and 64 each coordinate Cu cation. A disulfide bridge connects residues cysteine 58 and cysteine 147. Positions 64, 72, 81, and 84 each coordinate Zn(2+). Residue histidine 121 participates in Cu cation binding. Residues aspartate 125–leucine 136 are compositionally biased toward basic and acidic residues. Positions aspartate 125–arginine 144 are disordered. Residue arginine 144 participates in substrate binding.

The protein belongs to the Cu-Zn superoxide dismutase family. As to quaternary structure, homodimer. Cu cation serves as cofactor. The cofactor is Zn(2+).

The protein localises to the cytoplasm. It catalyses the reaction 2 superoxide + 2 H(+) = H2O2 + O2. Its function is as follows. Destroys radicals which are normally produced within the cells and which are toxic to biological systems. The protein is Superoxide dismutase [Cu-Zn] (SOD1) of Cordyceps tenuipes (Entomopathogenic fungus).